The sequence spans 341 residues: L-threonine 3-dehydrogenase (341 aa).

Zn(2+) is bound at residue Cys38. Catalysis depends on charge relay system residues Thr40 and His43. 6 residues coordinate Zn(2+): His63, Glu64, Cys93, Cys96, Cys99, and Cys107. NAD(+) is bound by residues Ile175, Asp195, Arg200, 262–264 (LGI), and 286–287 (IY).

Belongs to the zinc-containing alcohol dehydrogenase family. In terms of assembly, homotetramer. It depends on Zn(2+) as a cofactor.

It localises to the cytoplasm. The enzyme catalyses L-threonine + NAD(+) = (2S)-2-amino-3-oxobutanoate + NADH + H(+). Its pathway is amino-acid degradation; L-threonine degradation via oxydo-reductase pathway; glycine from L-threonine: step 1/2. In terms of biological role, catalyzes the NAD(+)-dependent oxidation of L-threonine to 2-amino-3-ketobutyrate. This Shigella boydii serotype 4 (strain Sb227) protein is L-threonine 3-dehydrogenase.